The following is a 965-amino-acid chain: Serine/threonine-protein kinase tousled-like 1 (965 aa).

6 disordered regions span residues 1–22 (MSML…GGER), 35–72 (PQNK…ATGD), 95–120 (QNSS…TRSS), 172–292 (NHQQ…KQER), 320–402 (QNQG…QSGR), and 538–576 (RKPL…DDAI). Residues 10 to 21 (VAGGGSSSGGGE) show a composition bias toward gly residues. The span at 42–52 (TVQSSGSSSNH) shows a compositional bias: polar residues. The span at 172 to 231 (NHQQQMQQMHYHQQQQQYQQQQAQHHQMYAPQIQQQQQQPQQQSQQQSAQQPQQSSAALQ) shows a compositional bias: low complexity. Polar residues-rich tracts occupy residues 233–244 (VNESSNLSSAGS) and 320–341 (QNQG…SYDS). The segment covering 342–355 (QQQQPQMNQHEMQN) has biased composition (low complexity). The span at 365-381 (LGVNNRGTPTPTQQQHY) shows a compositional bias: polar residues. The segment covering 382 to 401 (SSDSNSNSNQSPPGQGNQSG) has biased composition (low complexity). A compositionally biased stretch (polar residues) spans 552 to 572 (AVNSQNDSNGMQPSTSSNTNG). A Phosphoserine modification is found at S634. A Protein kinase domain is found at 651 to 928 (YLMLNLLGKG…VFELAKHELF (278 aa)). ATP contacts are provided by residues 657–665 (LGKGGFSEV) and K680. D781 serves as the catalytic Proton acceptor.

It belongs to the protein kinase superfamily. Ser/Thr protein kinase family. Interacts with air-2. Post-translationally, autophosphorylates in vitro. Phosphorylation on Ser-634 by air-2 enhances catalytic activity.

The protein resides in the nucleus. It catalyses the reaction L-seryl-[protein] + ATP = O-phospho-L-seryl-[protein] + ADP + H(+). The catalysed reaction is L-threonyl-[protein] + ATP = O-phospho-L-threonyl-[protein] + ADP + H(+). Functionally, essential for appropriate transcription during embryonic development. May act during transcription elongation to activate the RNA polymerase II large subunit (ama-1) by phosphorylating the Ser-2 residues of the C-terminal domain 7-residue repeats. Does not phosphorylate histone H3. The chain is Serine/threonine-protein kinase tousled-like 1 (tlk-1) from Caenorhabditis elegans.